A 69-amino-acid polypeptide reads, in one-letter code: Large ribosomal subunit protein uL29 (69 aa).

It belongs to the universal ribosomal protein uL29 family.

The sequence is that of Large ribosomal subunit protein uL29 from Lachnoclostridium phytofermentans (strain ATCC 700394 / DSM 18823 / ISDg) (Clostridium phytofermentans).